The primary structure comprises 174 residues: uncharacterized protein (174 aa).

The interval 153 to 174 is disordered; that stretch reads RSGNHSAGNVHPASPMIKVQGG.

This is an uncharacterized protein from Sinorhizobium fredii (strain NBRC 101917 / NGR234).